Consider the following 558-residue polypeptide: Dihydroxy-acid dehydratase (558 aa).

Asp-81 serves as a coordination point for Mg(2+). Cys-122 contacts [2Fe-2S] cluster. Mg(2+) is bound by residues Asp-123 and Lys-124. Residue Lys-124 is modified to N6-carboxylysine. Cys-195 is a [2Fe-2S] cluster binding site. Glu-447 is a Mg(2+) binding site. The active-site Proton acceptor is Ser-473.

The protein belongs to the IlvD/Edd family. Homodimer. The cofactor is [2Fe-2S] cluster. It depends on Mg(2+) as a cofactor.

It catalyses the reaction (2R)-2,3-dihydroxy-3-methylbutanoate = 3-methyl-2-oxobutanoate + H2O. It carries out the reaction (2R,3R)-2,3-dihydroxy-3-methylpentanoate = (S)-3-methyl-2-oxopentanoate + H2O. Its pathway is amino-acid biosynthesis; L-isoleucine biosynthesis; L-isoleucine from 2-oxobutanoate: step 3/4. The protein operates within amino-acid biosynthesis; L-valine biosynthesis; L-valine from pyruvate: step 3/4. Its function is as follows. Functions in the biosynthesis of branched-chain amino acids. Catalyzes the dehydration of (2R,3R)-2,3-dihydroxy-3-methylpentanoate (2,3-dihydroxy-3-methylvalerate) into 2-oxo-3-methylpentanoate (2-oxo-3-methylvalerate) and of (2R)-2,3-dihydroxy-3-methylbutanoate (2,3-dihydroxyisovalerate) into 2-oxo-3-methylbutanoate (2-oxoisovalerate), the penultimate precursor to L-isoleucine and L-valine, respectively. The chain is Dihydroxy-acid dehydratase from Bacillus subtilis (strain 168).